Here is a 312-residue protein sequence, read N- to C-terminus: Glyoxylate/hydroxypyruvate reductase A (312 aa).

Arg227 is a catalytic residue. His275 acts as the Proton donor in catalysis.

The protein belongs to the D-isomer specific 2-hydroxyacid dehydrogenase family. GhrA subfamily.

The protein localises to the cytoplasm. The catalysed reaction is glycolate + NADP(+) = glyoxylate + NADPH + H(+). It catalyses the reaction (R)-glycerate + NAD(+) = 3-hydroxypyruvate + NADH + H(+). It carries out the reaction (R)-glycerate + NADP(+) = 3-hydroxypyruvate + NADPH + H(+). Catalyzes the NADPH-dependent reduction of glyoxylate and hydroxypyruvate into glycolate and glycerate, respectively. The chain is Glyoxylate/hydroxypyruvate reductase A from Salmonella paratyphi B (strain ATCC BAA-1250 / SPB7).